A 98-amino-acid chain; its full sequence is NADH-ubiquinone oxidoreductase chain 4L (98 aa).

3 helical membrane-spanning segments follow: residues 1–21 (MSLIHINVFLAFTTSLMGLLM), 29–49 (SLLCLEGMMLSLFIMATMMVL), and 61–81 (IILLVFAACEAALGLSLLVMI).

Belongs to the complex I subunit 4L family. As to quaternary structure, core subunit of respiratory chain NADH dehydrogenase (Complex I) which is composed of 45 different subunits.

It is found in the mitochondrion inner membrane. It catalyses the reaction a ubiquinone + NADH + 5 H(+)(in) = a ubiquinol + NAD(+) + 4 H(+)(out). Functionally, core subunit of the mitochondrial membrane respiratory chain NADH dehydrogenase (Complex I) which catalyzes electron transfer from NADH through the respiratory chain, using ubiquinone as an electron acceptor. Part of the enzyme membrane arm which is embedded in the lipid bilayer and involved in proton translocation. The protein is NADH-ubiquinone oxidoreductase chain 4L (MT-ND4L) of Ceratotherium simum (White rhinoceros).